A 1066-amino-acid polypeptide reads, in one-letter code: Pumilio homolog 2 (1066 aa).

Residues 1-260 form an interaction with SNAPIN region; that stretch reads MNHDFQALAL…TVGLFDYNSQ (260 aa). Phosphoserine is present on residues Ser-67, Ser-70, Ser-82, and Ser-102. Disordered regions lie at residues 106-203, 368-408, and 490-551; these read KLDS…GPLP, TANQ…AESL, and TGST…SASL. Over residues 119–133 the composition is skewed to basic and acidic residues; the sequence is RDAETDGPEKGDQKG. 3 positions are modified to phosphoserine: Ser-136, Ser-177, and Ser-181. Phosphothreonine is present on Thr-183. The segment covering 368-383 has biased composition (low complexity); sequence TANQQAASQAQPGQQQ. Residues 394-406 are compositionally biased toward polar residues; sequence ITPSQGQQGQQAE. Thr-395 is modified (phosphothreonine). Residues 503–514 show a composition bias toward low complexity; that stretch reads QPPQQQQQQQQP. Residues 515-525 are compositionally biased toward polar residues; the sequence is STNLQSNSFYG. Over residues 526–540 the composition is skewed to low complexity; sequence SSSLTNSSQSSSLFS. Residues Ser-587 and Ser-592 each carry the phosphoserine modification. Residues 620 to 650 are disordered; sequence SPIGMPLPSQTPGHSLTPPPSLSSHGSSSSL. The segment covering 630-650 has biased composition (low complexity); that stretch reads TPGHSLTPPPSLSSHGSSSSL. Residue Arg-674 is modified to Omega-N-methylarginine. Residues Ser-684 and Ser-700 each carry the phosphoserine modification. Residues 706 to 1048 form the PUM-HD domain; that stretch reads GRSRLLEDFR…HILAKLEKYY (343 aa). Pumilio repeat units lie at residues 726 to 761, 762 to 797, 798 to 835, 836 to 871, 872 to 907, 908 to 943, 944 to 979, and 980 to 1022; these read DLIGHIVEFSQDQHGSRFIQQKLERATPAERQIVFN, EILQAAYQLMTDVFGNYVIQKFFEFGSLDQKLALAT, RIRGHVLPLALQMYGCRVIQKALESISSDQQVISEMVK, ELDGHVLKCVKDQNGNHVVQKCIECVQPQSLQFIID, AFKGQVFVLSTHPYGCRVIQRILEHCTAEQTLPILE, ELHQHTEQLVQDQYGNYVIQHVLEHGRPEDKSKIVS, EIRGKVLALSQHKFASNVVEKCVTHASRAERALLID, and EVCC…IIMH. The adenine-nucleotide binding in RNA target stretch occupies residues 741-745; it reads SRFIQ. The segment at 777–781 is uracil-nucleotide binding in RNA target; that stretch reads NYVIQ. Residues 813 to 817 are adenine-nucleotide binding in RNA target; the sequence is CRVIQ. A non-specific-nucleotide binding in RNA target region spans residues 851–855; it reads NHVVQ. Residues 887–891 are adenine-nucleotide binding in RNA target; that stretch reads CRVIQ. Residues 923–927 form a uracil-nucleotide binding in RNA target region; that stretch reads NYVIQ. A guanine-nucleotide binding in RNA target region spans residues 959-963; that stretch reads SNVVE. Residues 1002 to 1006 are uracil-nucleotide binding in RNA target; that stretch reads NYVVQ.

Homodimer; homodimerizes in vitro. Interacts with DAZ1, DAZL and NANOS1 via its pumilio repeats. Interacts with NANOS3. Interacts with SNAPIN. Recruits the CCR4-POP2-NOT deadenylase leading to translational inhibition and mRNA degradation. Interacts with DDX20. In case of viral infection, interacts with DHX58. In terms of tissue distribution, widely expressed. Expressed in embryonic stem cells, heart, kidney, lung, skin, intestine, spleen and thymus. Expressed at intermediate level in brain and liver. Weakly or not expressed in muscles and stomach. Expressed at various stages of myeloid and lymphoid cell development. In the testis expressed in the spermatogoni, spermatocytes, spermatids and Sertoli cells.

The protein resides in the cytoplasm. The protein localises to the cytoplasmic granule. It is found in the perinuclear region. Sequence-specific RNA-binding protein that acts as a post-transcriptional repressor by binding the 3'-UTR of mRNA targets. Binds to an RNA consensus sequence, the Pumilio Response Element (PRE), 5'-UGUANAUA-3', that is related to the Nanos Response Element (NRE). Mediates post-transcriptional repression of transcripts via different mechanisms: acts via direct recruitment of the CCR4-POP2-NOT deadenylase leading to translational inhibition and mRNA degradation. Also mediates deadenylation-independent repression by promoting accessibility of miRNAs. Acts as a post-transcriptional repressor of E2F3 mRNAs by binding to its 3'-UTR and facilitating miRNA regulation. Plays a role in cytoplasmic sensing of viral infection. Represses a program of genes necessary to maintain genomic stability such as key mitotic, DNA repair and DNA replication factors. Its ability to repress those target mRNAs is regulated by the lncRNA NORAD (non-coding RNA activated by DNA damage) which, due to its high abundance and multitude of PUMILIO binding sites, is able to sequester a significant fraction of PUM1 and PUM2 in the cytoplasm. May regulate DCUN1D3 mRNA levels. May support proliferation and self-renewal of stem cells. Binds specifically to miRNA MIR199A precursor, with PUM1, regulates miRNA MIR199A expression at a postranscriptional level. This Mus musculus (Mouse) protein is Pumilio homolog 2 (Pum2).